We begin with the raw amino-acid sequence, 478 residues long: BTB/POZ domain-containing protein 17 (478 aa).

The N-terminal stretch at 1–28 (MPRRGYSKPGSWGSFWAMLTLVGLVTHA) is a signal peptide. N-linked (GlcNAc...) asparagine glycosylation is found at Asn-61, Asn-100, and Asn-195. In terms of domain architecture, BTB spans 63-132 (SDVVLRVQAA…LYCGELTVLL (70 aa)). The 101-residue stretch at 169-269 (AVGWYHYAVG…IPPAQLFQLQ (101 aa)) folds into the BACK domain.

It is found in the secreted. This Homo sapiens (Human) protein is BTB/POZ domain-containing protein 17 (BTBD17).